We begin with the raw amino-acid sequence, 186 residues long: Probable nicotinate-nucleotide adenylyltransferase (186 aa).

It belongs to the NadD family.

The enzyme catalyses nicotinate beta-D-ribonucleotide + ATP + H(+) = deamido-NAD(+) + diphosphate. It functions in the pathway cofactor biosynthesis; NAD(+) biosynthesis; deamido-NAD(+) from nicotinate D-ribonucleotide: step 1/1. Catalyzes the reversible adenylation of nicotinate mononucleotide (NaMN) to nicotinic acid adenine dinucleotide (NaAD). In Thermus thermophilus (strain ATCC 27634 / DSM 579 / HB8), this protein is Probable nicotinate-nucleotide adenylyltransferase.